The primary structure comprises 617 residues: Cell pattern formation-associated protein STUA (617 aa).

Residues 1-79 (MNQPAADMYY…PASQMGQNVL (79 aa)) are disordered. Residues 24–34 (TVTSGAMSYHS) are compositionally biased toward polar residues. The span at 45–58 (PQYAPQPQYSQYGY) shows a compositional bias: low complexity. The span at 61–76 (GLTSPQSAQPASQMGQ) shows a compositional bias: polar residues. Residues 106 to 212 (RVTATLWEDE…HNIGALLYHP (107 aa)) form the HTH APSES-type domain. Positions 140–161 (GTKLLNVAGMTRGRRDGILKSE) form a DNA-binding region, H-T-H motif. Disordered stretches follow at residues 223–274 (AAAE…MGRP), 300–451 (SDSG…DSGA), and 463–617 (APAV…PRRR). Low complexity-rich tracts occupy residues 305–318 (QWAQ…AQGA) and 334–345 (PATPASTPPGTT). Polar residues-rich tracts occupy residues 346-361 (IQNM…QYDN) and 368-382 (PSAQ…NPAS). The span at 438-447 (EHDHDAEYTH) shows a compositional bias: basic and acidic residues. The span at 488-509 (PASGRATPRTAAAPQPYYSQQA) shows a compositional bias: low complexity. Polar residues-rich tracts occupy residues 519–533 (QQPS…SNDR) and 553–563 (SMSNGYASQMN). The interval 569-593 (KRGRDEDDDLQRPSSGGGMDLKRRK) is nuclear localization domain. A compositionally biased stretch (low complexity) spans 599–617 (QVPAMAYAPPVMAQQPRRR).

Belongs to the EFG1/PHD1/stuA family.

It localises to the nucleus. Its function is as follows. Transcription factor that regulates asexual reproduction. Binds the StuA-response elements (StRE) with the consensus sequence 5'-(A/T)CGCG(T/A)N(A/C)-3' at the promoters of target genes. Required for the formation of aerial hyphae, efficient conidiation, and the formation of perithecia. Essential for the generation of normal turgor pressure within the appressorium. Required for infection of intact apple fruit and penetration of onion epidermal cells. This is Cell pattern formation-associated protein STUA from Colletotrichum gloeosporioides (Anthracnose fungus).